Here is a 388-residue protein sequence, read N- to C-terminus: MNLHEYQAKQLFARYGLPAPVGYACTTPREAEEAASKIGAGPWVVKCQVHAGGRGKAGGVKVVNSKEDIRAFAENWLGKRLVTYQTDANGQPVNQILVEAATDIAKELYLGAVVDRSSRRVVFMASTEGGVEIEKVAEETPHLIHKVALDPLTGPMPYQGRELAFKLGLEGKLVQQFTKIFMGLATIFLERDLALIEINPLVITKQGDLICLDGKLGADGNALFRQPDLREMRDQSQEDPRAAQAAQWELNYVALDGNIGCMVNGAGLAMGTMDIVKLHGGEPANFLDVGGGATKERVTEAFKIILSDDKVKAVLVNIFGGIVRCDLIADGIIGAVAEVGVNVPVVVRLEGNNAELGAKKLADSGLNIIAAKGLTDAAQQVVAAVEGK.

Positions lysine 9–glutamine 244 constitute an ATP-grasp domain. Residues lysine 46, glycine 53 to glycine 55, glutamate 99, threonine 102, and glutamate 107 contribute to the ATP site. Residues asparagine 199 and aspartate 213 each contribute to the Mg(2+) site. Substrate contacts are provided by residues asparagine 264 and glycine 321–valine 323.

It belongs to the succinate/malate CoA ligase beta subunit family. As to quaternary structure, heterotetramer of two alpha and two beta subunits. Mg(2+) serves as cofactor.

The enzyme catalyses succinate + ATP + CoA = succinyl-CoA + ADP + phosphate. The catalysed reaction is GTP + succinate + CoA = succinyl-CoA + GDP + phosphate. The protein operates within carbohydrate metabolism; tricarboxylic acid cycle; succinate from succinyl-CoA (ligase route): step 1/1. In terms of biological role, succinyl-CoA synthetase functions in the citric acid cycle (TCA), coupling the hydrolysis of succinyl-CoA to the synthesis of either ATP or GTP and thus represents the only step of substrate-level phosphorylation in the TCA. The beta subunit provides nucleotide specificity of the enzyme and binds the substrate succinate, while the binding sites for coenzyme A and phosphate are found in the alpha subunit. The polypeptide is Succinate--CoA ligase [ADP-forming] subunit beta (Shigella flexneri serotype 5b (strain 8401)).